Here is a 66-residue protein sequence, read N- to C-terminus: Small ribosomal subunit protein bS21 (66 aa).

The protein belongs to the bacterial ribosomal protein bS21 family.

The protein is Small ribosomal subunit protein bS21 of Rickettsia felis (strain ATCC VR-1525 / URRWXCal2) (Rickettsia azadi).